Consider the following 221-residue polypeptide: Adenylate kinase (221 aa).

ATP is bound at residue 10–15 (GAGKGT). The NMP stretch occupies residues 30–59 (STGDMLRAAVKAGTPLGLEAKRFMDAGELV). AMP is bound by residues threonine 31, arginine 36, 57-59 (ELV), 85-88 (GFPR), and glutamine 92. The segment at 122–159 (GRRSHAASGRTYHVKFNPPKVEGLDDVTGEPLIQRDDD) is LID. ATP is bound by residues arginine 123 and 132-133 (TY). AMP is bound by residues arginine 156 and arginine 167. Glycine 207 contacts ATP.

This sequence belongs to the adenylate kinase family. In terms of assembly, monomer.

It localises to the cytoplasm. It carries out the reaction AMP + ATP = 2 ADP. Its pathway is purine metabolism; AMP biosynthesis via salvage pathway; AMP from ADP: step 1/1. Its function is as follows. Catalyzes the reversible transfer of the terminal phosphate group between ATP and AMP. Plays an important role in cellular energy homeostasis and in adenine nucleotide metabolism. In Paraburkholderia xenovorans (strain LB400), this protein is Adenylate kinase.